The primary structure comprises 476 residues: Ribulose bisphosphate carboxylase large chain (476 aa).

Residues Asn-124 and Thr-174 each contribute to the substrate site. The active-site Proton acceptor is the Lys-176. Residue Lys-178 participates in substrate binding. Mg(2+) is bound by residues Lys-202, Asp-204, and Glu-205. Lys-202 carries the N6-carboxylysine modification. His-295 serves as the catalytic Proton acceptor. 3 residues coordinate substrate: Arg-296, His-328, and Ser-380.

It belongs to the RuBisCO large chain family. Type I subfamily. As to quaternary structure, heterohexadecamer of 8 large chains and 8 small chains; disulfide-linked. The disulfide link is formed within the large subunit homodimers. Mg(2+) is required as a cofactor. In terms of processing, the disulfide bond which can form in the large chain dimeric partners within the hexadecamer appears to be associated with oxidative stress and protein turnover.

Its subcellular location is the carboxysome. It catalyses the reaction 2 (2R)-3-phosphoglycerate + 2 H(+) = D-ribulose 1,5-bisphosphate + CO2 + H2O. The enzyme catalyses D-ribulose 1,5-bisphosphate + O2 = 2-phosphoglycolate + (2R)-3-phosphoglycerate + 2 H(+). In terms of biological role, ruBisCO catalyzes two reactions: the carboxylation of D-ribulose 1,5-bisphosphate, the primary event in carbon dioxide fixation, as well as the oxidative fragmentation of the pentose substrate in the photorespiration process. Both reactions occur simultaneously and in competition at the same active site. The polypeptide is Ribulose bisphosphate carboxylase large chain (Trichodesmium erythraeum (strain IMS101)).